The chain runs to 323 residues: Zinc finger protein 784 (323 aa).

The segment at 1-26 (MAAARPEAQSRSSPTPESRSQEPLDL) is disordered. Residues 9 to 18 (QSRSSPTPES) show a composition bias toward polar residues. Ser-13 bears the Phosphoserine mark. C2H2-type zinc fingers lie at residues 65 to 87 (FHCA…EHGH), 101 to 123 (SRCH…YSLH), 129 to 151 (YRCA…QHRH), 196 to 218 (FACR…ERVH), 224 to 246 (YHCG…ARIH), and 252 to 274 (FRCT…QRTH). The segment at 269-323 (KHQRTHFHGPGPGLGDSGGQLGSSAAEGSGSGCGVGDPAEEGRGETAKVKVEADQ) is disordered. Gly residues predominate over residues 278 to 289 (PGPGLGDSGGQL). Residues 308-323 (EEGRGETAKVKVEADQ) show a composition bias toward basic and acidic residues. Lys-318 is covalently cross-linked (Glycyl lysine isopeptide (Lys-Gly) (interchain with G-Cter in SUMO2)).

It belongs to the krueppel C2H2-type zinc-finger protein family.

The protein resides in the nucleus. Its function is as follows. May be involved in transcriptional regulation. In Homo sapiens (Human), this protein is Zinc finger protein 784 (ZNF784).